We begin with the raw amino-acid sequence, 268 residues long: tRNA (guanine-N(1)-)-methyltransferase (268 aa).

Residues glycine 110 and 129-134 (IGDFVM) each bind S-adenosyl-L-methionine. The disordered stretch occupies residues 246-268 (WGAPPAPVKRHRKRRPETTESAS).

The protein belongs to the RNA methyltransferase TrmD family. In terms of assembly, homodimer.

It localises to the cytoplasm. It catalyses the reaction guanosine(37) in tRNA + S-adenosyl-L-methionine = N(1)-methylguanosine(37) in tRNA + S-adenosyl-L-homocysteine + H(+). Its function is as follows. Specifically methylates guanosine-37 in various tRNAs. The sequence is that of tRNA (guanine-N(1)-)-methyltransferase from Deinococcus deserti (strain DSM 17065 / CIP 109153 / LMG 22923 / VCD115).